The sequence spans 130 residues: MVMTDPIADMLTRIRNANQMSHAKVLIPASKLKLEILSVLKTEGFIKNFYLPQSSRDIIVSLKYAPNKEKVIKGLKRVSKPGLRVYATAQQIPKVLNGLGVALVSTSKGILTDSQARISQVGGEILAYVW.

The protein belongs to the universal ribosomal protein uS8 family. Part of the 30S ribosomal subunit. Contacts proteins S5 and S12.

Functionally, one of the primary rRNA binding proteins, it binds directly to 16S rRNA central domain where it helps coordinate assembly of the platform of the 30S subunit. The sequence is that of Small ribosomal subunit protein uS8 from Phytoplasma australiense.